A 75-amino-acid chain; its full sequence is Small ribosomal subunit protein bS18 (75 aa).

This sequence belongs to the bacterial ribosomal protein bS18 family. Part of the 30S ribosomal subunit. Forms a tight heterodimer with protein bS6.

Its function is as follows. Binds as a heterodimer with protein bS6 to the central domain of the 16S rRNA, where it helps stabilize the platform of the 30S subunit. The chain is Small ribosomal subunit protein bS18 from Pasteurella multocida (strain Pm70).